We begin with the raw amino-acid sequence, 228 residues long: L-ribulose-5-phosphate 4-epimerase UlaF (228 aa).

Substrate contacts are provided by residues 26-27, 43-44, and 72-73; these read GN, SG, and SS. Asp74, His93, and His95 together coordinate Zn(2+). Asp118 acts as the Proton donor/acceptor in catalysis. His167 contacts Zn(2+). The Proton donor/acceptor role is filled by Tyr225.

It belongs to the aldolase class II family. AraD/FucA subfamily. It depends on Zn(2+) as a cofactor.

It carries out the reaction L-ribulose 5-phosphate = D-xylulose 5-phosphate. The protein operates within cofactor degradation; L-ascorbate degradation; D-xylulose 5-phosphate from L-ascorbate: step 4/4. Functionally, catalyzes the isomerization of L-ribulose 5-phosphate to D-xylulose 5-phosphate. Is involved in the anaerobic L-ascorbate utilization. The protein is L-ribulose-5-phosphate 4-epimerase UlaF of Escherichia coli O7:K1 (strain IAI39 / ExPEC).